We begin with the raw amino-acid sequence, 154 residues long: Protein X (154 aa).

A mitochondrial targeting sequence region spans residues 68–117; it reads PCALRFTSARRMETTVNAPQSLPTPLHKRTLGLSPRSTTWIEEYIKDCVF.

Belongs to the orthohepadnavirus protein X family. May form homodimer. May interact with host CEBPA, CFLAR, CREB1, DDB1, E4F1, HBXIP, HSPD1/HSP60, NFKBIA, POLR2E and SMAD4. Interacts with host SMC5-SMC6 complex and induces its degradation. Interacts with host TRPC4AP; leading to prevent ubiquitination of TRPC4AP. Interacts with host PLSCR1; this interaction promotes ubiquitination and degradation of HBx and impairs HBx-mediated cell proliferation. In terms of processing, a fraction may be phosphorylated in insect cells and HepG2 cells, a human hepatoblastoma cell line. Phosphorylated in vitro by host protein kinase C or mitogen-activated protein kinase. N-acetylated in insect cells.

The protein localises to the host cytoplasm. It is found in the host nucleus. The protein resides in the host mitochondrion. Functionally, multifunctional protein that plays a role in silencing host antiviral defenses and promoting viral transcription. Does not seem to be essential for HBV infection. May be directly involved in development of cirrhosis and liver cancer (hepatocellular carcinoma). Most of cytosolic activities involve modulation of cytosolic calcium. The effect on apoptosis is controversial depending on the cell types in which the studies have been conducted. May induce apoptosis by localizing in mitochondria and causing loss of mitochondrial membrane potential. May also modulate apoptosis by binding host CFLAR, a key regulator of the death-inducing signaling complex (DISC). Promotes viral transcription by using the host E3 ubiquitin ligase DDB1 to target the SMC5-SMC6 complex to proteasomal degradation. This host complex would otherwise bind to viral episomal DNA, and prevents its transcription. Moderately stimulates transcription of many different viral and cellular transcription elements. Promoters and enhancers stimulated by HBx contain DNA binding sites for NF-kappa-B, AP-1, AP-2, c-EBP, ATF/CREB, or the calcium-activated factor NF-AT. In Homo sapiens (Human), this protein is Protein X.